The sequence spans 251 residues: Segregation and condensation protein A (251 aa).

It belongs to the ScpA family. In terms of assembly, component of a cohesin-like complex composed of ScpA, ScpB and the Smc homodimer, in which ScpA and ScpB bind to the head domain of Smc. The presence of the three proteins is required for the association of the complex with DNA.

The protein resides in the cytoplasm. Functionally, participates in chromosomal partition during cell division. May act via the formation of a condensin-like complex containing Smc and ScpB that pull DNA away from mid-cell into both cell halves. This is Segregation and condensation protein A from Bacillus licheniformis (strain ATCC 14580 / DSM 13 / JCM 2505 / CCUG 7422 / NBRC 12200 / NCIMB 9375 / NCTC 10341 / NRRL NRS-1264 / Gibson 46).